We begin with the raw amino-acid sequence, 304 residues long: Nucleotide-binding protein RHA1_ro07174 (304 aa).

Residue 24–31 (GLSGAGLQ) participates in ATP binding. Residue 75 to 78 (DVRS) participates in GTP binding.

Belongs to the RapZ-like family.

Its function is as follows. Displays ATPase and GTPase activities. The sequence is that of Nucleotide-binding protein RHA1_ro07174 from Rhodococcus jostii (strain RHA1).